Reading from the N-terminus, the 119-residue chain is Autophagy-related protein 8A (119 aa).

Glycine 117 is lipidated: Phosphatidylethanolamine amidated glycine. A propeptide spans 118-119 (SA) (removed in mature form).

The protein belongs to the ATG8 family. As to quaternary structure, interacts with ATG4. The C-terminal 2 residues are removed by ATG4 to expose Gly-117 at the C-terminus. The C-terminal Gly is then amidated with phosphatidylethanolamine by an activating system similar to that for ubiquitin. In terms of tissue distribution, constitutively expressed.

It is found in the cytoplasmic vesicle. The protein resides in the autophagosome membrane. The protein localises to the vacuole membrane. It localises to the cytoplasm. Its subcellular location is the cytoskeleton. Functionally, ubiquitin-like modifier involved in cytoplasm to vacuole transport (Cvt) vesicles and autophagosomes formation. May mediate the delivery of the vesicles and autophagosomes to the vacuole via the microtubule cytoskeleton. Its function is as follows. Ubiquitin-like modifier involved in autophagosomes formation. May mediate the delivery of the autophagosomes to the vacuole via the microtubule cytoskeleton. The polypeptide is Autophagy-related protein 8A (ATG8A) (Oryza sativa subsp. indica (Rice)).